Consider the following 739-residue polypeptide: Catalase-peroxidase (739 aa).

Positions 1–20 (MGSNECPYSRQNANIGGGGQ) are disordered. A cross-link (tryptophyl-tyrosyl-methioninium (Trp-Tyr) (with M-243)) is located at residues 94-217 (WHSAGTYRVF…LAASHMGLIY (124 aa)). The active-site Proton acceptor is histidine 95. Residues 217–243 (YVNPEGPNKNPDPVLAAKDIRITFGRM) constitute a cross-link (tryptophyl-tyrosyl-methioninium (Tyr-Met) (with W-94)). A heme b-binding site is contributed by histidine 258.

It belongs to the peroxidase family. Peroxidase/catalase subfamily. Homodimer or homotetramer. It depends on heme b as a cofactor. Formation of the three residue Trp-Tyr-Met cross-link is important for the catalase, but not the peroxidase activity of the enzyme.

It localises to the cytoplasm. The enzyme catalyses H2O2 + AH2 = A + 2 H2O. The catalysed reaction is 2 H2O2 = O2 + 2 H2O. In terms of biological role, bifunctional enzyme with both catalase and broad-spectrum peroxidase activity. The polypeptide is Catalase-peroxidase (Emericella nidulans (strain FGSC A4 / ATCC 38163 / CBS 112.46 / NRRL 194 / M139) (Aspergillus nidulans)).